Consider the following 635-residue polypeptide: Biosynthetic arginine decarboxylase (635 aa).

Position 100 is an N6-(pyridoxal phosphate)lysine (Lys100). 282-292 contacts substrate; it reads LDIGGGLGVDY.

This sequence belongs to the Orn/Lys/Arg decarboxylase class-II family. SpeA subfamily. The cofactor is Mg(2+). Pyridoxal 5'-phosphate serves as cofactor.

The catalysed reaction is L-arginine + H(+) = agmatine + CO2. Its pathway is amine and polyamine biosynthesis; agmatine biosynthesis; agmatine from L-arginine: step 1/1. Functionally, catalyzes the biosynthesis of agmatine from arginine. The chain is Biosynthetic arginine decarboxylase (speA) from Citrifermentans bemidjiense (strain ATCC BAA-1014 / DSM 16622 / JCM 12645 / Bem) (Geobacter bemidjiensis).